Reading from the N-terminus, the 105-residue chain is SAGA-associated factor 11 (105 aa).

Residues 76–97 (FRCPNCSRDLSANRFAAHLERC) form an SGF11-type zinc finger.

The protein belongs to the SGF11 family. Component of the 1.8 MDa SAGA transcription coactivator-HAT complex. SAGA is built of 5 distinct domains with specialized functions. Within the SAGA complex, SUS1, SGF11, SGF73 and UBP8 form an additional subcomplex of SAGA called the DUB module (deubiquitination module). Interacts directly with SGF73, SUS1 and UBP8.

The protein resides in the nucleus. Functionally, functions as a component of the transcription regulatory histone acetylation (HAT) complex SAGA. At the promoters, SAGA is required for recruitment of the basal transcription machinery. It influences RNA polymerase II transcriptional activity through different activities such as TBP interaction and promoter selectivity, interaction with transcription activators, and chromatin modification through histone acetylation and deubiquitination. SAGA acetylates nucleosomal histone H3 to some extent (to form H3K9ac, H3K14ac, H3K18ac and H3K23ac). SAGA interacts with DNA via upstream activating sequences (UASs). Involved in transcriptional regulation of a subset of SAGA-regulated genes. Within the SAGA complex, participates in a subcomplex, that specifically deubiquitinates histones H2B. In Eremothecium gossypii (strain ATCC 10895 / CBS 109.51 / FGSC 9923 / NRRL Y-1056) (Yeast), this protein is SAGA-associated factor 11.